A 123-amino-acid chain; its full sequence is Small ribosomal subunit protein uS12 (123 aa).

The segment at 1–29 is disordered; the sequence is MPTINQLVRKGRVPQKAKSKVPAMEQNPQ. Positions 9-19 are enriched in basic residues; sequence RKGRVPQKAKS. Asp89 carries the 3-methylthioaspartic acid modification.

It belongs to the universal ribosomal protein uS12 family. As to quaternary structure, part of the 30S ribosomal subunit. Contacts proteins S8 and S17. May interact with IF1 in the 30S initiation complex.

In terms of biological role, with S4 and S5 plays an important role in translational accuracy. Interacts with and stabilizes bases of the 16S rRNA that are involved in tRNA selection in the A site and with the mRNA backbone. Located at the interface of the 30S and 50S subunits, it traverses the body of the 30S subunit contacting proteins on the other side and probably holding the rRNA structure together. The combined cluster of proteins S8, S12 and S17 appears to hold together the shoulder and platform of the 30S subunit. The sequence is that of Small ribosomal subunit protein uS12 from Erythrobacter litoralis (strain HTCC2594).